Consider the following 91-residue polypeptide: MNKNELVSAVAEKAGLTKADAASAVDAVFETVQSELKNGGDIRLAGFGSFSVSRREASKGRNPSTGAEVDIPARNVPKFSAGKGLKDAVNS.

The protein belongs to the bacterial histone-like protein family.

Its function is as follows. Histone-like DNA-binding protein which is capable of wrapping DNA to stabilize it, and thus to prevent its denaturation under extreme environmental conditions. The sequence is that of DNA-binding protein HRL18 from Rhizobium leguminosarum.